A 196-amino-acid polypeptide reads, in one-letter code: ATP-dependent Clp protease proteolytic subunit (196 aa).

Ser-96 (nucleophile) is an active-site residue. Residue His-121 is part of the active site.

This sequence belongs to the peptidase S14 family. Fourteen ClpP subunits assemble into 2 heptameric rings which stack back to back to give a disk-like structure with a central cavity, resembling the structure of eukaryotic proteasomes.

It localises to the cytoplasm. It catalyses the reaction Hydrolysis of proteins to small peptides in the presence of ATP and magnesium. alpha-casein is the usual test substrate. In the absence of ATP, only oligopeptides shorter than five residues are hydrolyzed (such as succinyl-Leu-Tyr-|-NHMec, and Leu-Tyr-Leu-|-Tyr-Trp, in which cleavage of the -Tyr-|-Leu- and -Tyr-|-Trp bonds also occurs).. In terms of biological role, cleaves peptides in various proteins in a process that requires ATP hydrolysis. Has a chymotrypsin-like activity. Plays a major role in the degradation of misfolded proteins. This chain is ATP-dependent Clp protease proteolytic subunit, found in Streptococcus salivarius.